Consider the following 668-residue polypeptide: UvrABC system protein B (668 aa).

The region spanning 25–170 (NSILLGNKYQ…FVGQKISIKE (146 aa)) is the Helicase ATP-binding domain. 38–45 (GVTGSGKT) serves as a coordination point for ATP. Residues 91 to 114 (YYDYYQPESYVPSKDLFIEKEATI) carry the Beta-hairpin motif. The Helicase C-terminal domain maps to 429–595 (QMEDLYSEIQ…TIVKKIQNIL (167 aa)). Positions 622-657 (KKLIDKLKFDLEEAVNDERFEDAIVLRDKIKELSSK) constitute a UVR domain.

It belongs to the UvrB family. As to quaternary structure, forms a heterotetramer with UvrA during the search for lesions. Interacts with UvrC in an incision complex.

Its subcellular location is the cytoplasm. Functionally, the UvrABC repair system catalyzes the recognition and processing of DNA lesions. A damage recognition complex composed of 2 UvrA and 2 UvrB subunits scans DNA for abnormalities. Upon binding of the UvrA(2)B(2) complex to a putative damaged site, the DNA wraps around one UvrB monomer. DNA wrap is dependent on ATP binding by UvrB and probably causes local melting of the DNA helix, facilitating insertion of UvrB beta-hairpin between the DNA strands. Then UvrB probes one DNA strand for the presence of a lesion. If a lesion is found the UvrA subunits dissociate and the UvrB-DNA preincision complex is formed. This complex is subsequently bound by UvrC and the second UvrB is released. If no lesion is found, the DNA wraps around the other UvrB subunit that will check the other stand for damage. The protein is UvrABC system protein B of Borreliella burgdorferi (strain ZS7) (Borrelia burgdorferi).